Consider the following 154-residue polypeptide: Ribonuclease HI (154 aa).

The RNase H type-1 domain occupies 1 to 142; sequence MQKQIEIFTD…CDQLAKAGAE (142 aa). Mg(2+) contacts are provided by D10, E48, D70, and D134.

Belongs to the RNase H family. As to quaternary structure, monomer. It depends on Mg(2+) as a cofactor.

The protein localises to the cytoplasm. The enzyme catalyses Endonucleolytic cleavage to 5'-phosphomonoester.. Its function is as follows. Endonuclease that specifically degrades the RNA of RNA-DNA hybrids. This is Ribonuclease HI (rnhA) from Pasteurella multocida (strain Pm70).